The sequence spans 442 residues: Putative aminohydrolase SsnA (442 aa).

His-62, His-64, His-227, and Asp-312 together coordinate Zn(2+).

This sequence belongs to the metallo-dependent hydrolases superfamily. ATZ/TRZ family.

This Escherichia coli (strain K12) protein is Putative aminohydrolase SsnA (ssnA).